The chain runs to 159 residues: ATP synthase subunit b 2 (159 aa).

Residues 1 to 21 (MDATFWAFIALVIFVAIVVYM) form a helical membrane-spanning segment.

It belongs to the ATPase B chain family. As to quaternary structure, F-type ATPases have 2 components, F(1) - the catalytic core - and F(0) - the membrane proton channel. F(1) has five subunits: alpha(3), beta(3), gamma(1), delta(1), epsilon(1). F(0) has three main subunits: a(1), b(2) and c(10-14). The alpha and beta chains form an alternating ring which encloses part of the gamma chain. F(1) is attached to F(0) by a central stalk formed by the gamma and epsilon chains, while a peripheral stalk is formed by the delta and b chains.

Its subcellular location is the cell inner membrane. In terms of biological role, f(1)F(0) ATP synthase produces ATP from ADP in the presence of a proton or sodium gradient. F-type ATPases consist of two structural domains, F(1) containing the extramembraneous catalytic core and F(0) containing the membrane proton channel, linked together by a central stalk and a peripheral stalk. During catalysis, ATP synthesis in the catalytic domain of F(1) is coupled via a rotary mechanism of the central stalk subunits to proton translocation. Its function is as follows. Component of the F(0) channel, it forms part of the peripheral stalk, linking F(1) to F(0). The sequence is that of ATP synthase subunit b 2 from Brucella ovis (strain ATCC 25840 / 63/290 / NCTC 10512).